We begin with the raw amino-acid sequence, 63 residues long: Metallothionein (63 aa).

The interval 1-30 (MDPQDCTCAAGDSCSCAGSCKCKNCRCRSC) is beta. The a divalent metal cation site is built by cysteine 6, cysteine 8, cysteine 14, cysteine 16, cysteine 20, cysteine 22, cysteine 25, cysteine 27, cysteine 30, cysteine 34, cysteine 35, cysteine 37, cysteine 38, cysteine 42, cysteine 45, cysteine 49, cysteine 51, cysteine 59, cysteine 61, and cysteine 62. The alpha stretch occupies residues 31–63 (RKSCCSCCPAGCNNCAKGCVCKEPASSKCSCCH).

The protein belongs to the metallothionein superfamily. Type 1 family.

Functionally, metallothioneins have a high content of cysteine residues that bind various heavy metals. In Anas platyrhynchos (Mallard), this protein is Metallothionein.